We begin with the raw amino-acid sequence, 41 residues long: Pi-stichotoxin-Hcr5a (41 aa).

Intrachain disulfides connect cysteine 4-cysteine 37, cysteine 6-cysteine 30, and cysteine 20-cysteine 38.

It belongs to the sea anemone type 3 (BDS) potassium channel toxin family.

The protein localises to the secreted. The protein resides in the nematocyst. Weakly inhibits human homomeric ASIC3 (IC(50)=5.5 uM). This chain is Pi-stichotoxin-Hcr5a, found in Radianthus crispa (Leathery sea anemone).